The sequence spans 660 residues: DNA mismatch repair protein MutL (660 aa).

Disordered regions lie at residues 368–426 (PQQT…PTKK) and 439–461 (NREQRESTSQVNEQSHTFRSTQQ). A compositionally biased stretch (low complexity) spans 406–417 (SSSSNSTAPSRS).

It belongs to the DNA mismatch repair MutL/HexB family.

Its function is as follows. This protein is involved in the repair of mismatches in DNA. It is required for dam-dependent methyl-directed DNA mismatch repair. May act as a 'molecular matchmaker', a protein that promotes the formation of a stable complex between two or more DNA-binding proteins in an ATP-dependent manner without itself being part of a final effector complex. This Aliivibrio fischeri (strain ATCC 700601 / ES114) (Vibrio fischeri) protein is DNA mismatch repair protein MutL.